Here is a 146-residue protein sequence, read N- to C-terminus: Hemoglobin subunit beta (146 aa).

At V1 the chain carries N-acetylvaline. Residues 2 to 146 (HLTGEEKSAV…VANALAHKYH (145 aa)) form the Globin domain. T12 is modified (phosphothreonine). S44 is subject to Phosphoserine. N6-acetyllysine is present on K59. H63 is a binding site for heme b. K82 is subject to N6-acetyllysine. Residue H92 coordinates heme b. C93 carries the post-translational modification S-nitrosocysteine. At K144 the chain carries N6-acetyllysine.

This sequence belongs to the globin family. In terms of assembly, heterotetramer of two alpha chains and two beta chains. Red blood cells.

In terms of biological role, involved in oxygen transport from the lung to the various peripheral tissues. The protein is Hemoglobin subunit beta (HBB) of Mico argentatus (Silvery marmoset).